Consider the following 134-residue polypeptide: Inner membrane protein YqjE (134 aa).

Topologically, residues 1-55 are cytoplasmic; that stretch reads MADTHHAQGPGKSVLGIGQRIVSIMVEMVETRLRLAVVELEEEKANLFQLLLMLG. The helical transmembrane segment at 56–76 threads the bilayer; the sequence is LTMLFAAFGLMSLMVLIIWAV. The Periplasmic portion of the chain corresponds to 77–83; that stretch reads DPQYRLN. The chain crosses the membrane as a helical span at residues 84 to 104; that stretch reads AMIATTVVLLLLALIGGIWTL. The Cytoplasmic segment spans residues 105–134; that stretch reads RKSRKSTLLRHTRHELANDRQLLEEESREQ.

The protein localises to the cell inner membrane. The polypeptide is Inner membrane protein YqjE (yqjE) (Escherichia coli O157:H7).